The following is a 1555-amino-acid chain: Protein TASOR (1555 aa).

Disordered stretches follow at residues 1–74 (MEEN…DKRA), 645–711 (QKKK…RQET), 744–773 (QNSTEELPSQKLKNLSQAHDTEREGAGQDQ), 870–911 (ALPN…TTPS), and 1390–1462 (NQGD…PTLD). Over residues 35–47 (VQQTLKRTNSTES) the composition is skewed to polar residues. Residues 61 to 71 (RRFQIPRKSRD) show a composition bias toward basic residues. Residues 667-688 (DRQSEKAWKHRKCEENVHHDNE) show a composition bias toward basic and acidic residues. Polar residues-rich tracts occupy residues 692 to 702 (SAQSLISSLGG) and 744 to 761 (QNSTEELPSQKLKNLSQA). The span at 888 to 904 (PLHETERQRPRHDRDYC) shows a compositional bias: basic and acidic residues. The span at 1402–1417 (SKEEEDMSLDSEDDTP) shows a compositional bias: acidic residues. Residues 1448–1458 (ESPSTLNQGKT) show a composition bias toward polar residues.

Belongs to the TASOR family. Component of the HUSH complex.

It is found in the nucleus. Its subcellular location is the chromosome. In terms of biological role, component of the HUSH complex, a multiprotein complex that mediates epigenetic repression. The HUSH complex is recruited to genomic loci rich in H3K9me3 and is probably required to maintain transcriptional silencing by promoting further deposition of H3K9me3. This Xenopus laevis (African clawed frog) protein is Protein TASOR.